The chain runs to 48 residues: Delta-stichotoxin-Hcr1b (48 aa).

Intrachain disulfides connect cysteine 3/cysteine 43, cysteine 5/cysteine 33, and cysteine 26/cysteine 44.

It belongs to the sea anemone sodium channel inhibitory toxin family. Type II subfamily.

Its subcellular location is the secreted. The protein localises to the nematocyst. Its function is as follows. Binds to site 3 of voltage-gated sodium channels and inhibits the inactivation process. This Radianthus crispa (Leathery sea anemone) protein is Delta-stichotoxin-Hcr1b.